The primary structure comprises 188 residues: Ribosome-recycling factor (188 aa).

It belongs to the RRF family.

The protein localises to the cytoplasm. In terms of biological role, responsible for the release of ribosomes from messenger RNA at the termination of protein biosynthesis. May increase the efficiency of translation by recycling ribosomes from one round of translation to another. This Akkermansia muciniphila (strain ATCC BAA-835 / DSM 22959 / JCM 33894 / BCRC 81048 / CCUG 64013 / CIP 107961 / Muc) protein is Ribosome-recycling factor.